Here is a 257-residue protein sequence, read N- to C-terminus: NAD-capped RNA hydrolase NudC (257 aa).

Arginine 69 contributes to the substrate binding site. Cysteine 98 and cysteine 101 together coordinate Zn(2+). A substrate-binding site is contributed by glutamate 111. Zn(2+) contacts are provided by cysteine 116 and cysteine 119. Position 124 (tyrosine 124) interacts with substrate. The Nudix hydrolase domain maps to 125-248; that stretch reads PQIAPCIIVA…TVARRLIEDT (124 aa). Alanine 158, glutamate 174, and glutamate 178 together coordinate a divalent metal cation. The Nudix box signature appears at 159-180; the sequence is GFVEVGETLEQAVAREVMEESG. A substrate-binding site is contributed by 192 to 199; it reads QPWPFPQS. Glutamate 219 is a binding site for a divalent metal cation. Alanine 241 contacts substrate.

Belongs to the Nudix hydrolase family. NudC subfamily. Homodimer. The cofactor is Mg(2+). It depends on Mn(2+) as a cofactor. Zn(2+) is required as a cofactor.

It carries out the reaction a 5'-end NAD(+)-phospho-ribonucleoside in mRNA + H2O = a 5'-end phospho-adenosine-phospho-ribonucleoside in mRNA + beta-nicotinamide D-ribonucleotide + 2 H(+). The catalysed reaction is NAD(+) + H2O = beta-nicotinamide D-ribonucleotide + AMP + 2 H(+). It catalyses the reaction NADH + H2O = reduced beta-nicotinamide D-ribonucleotide + AMP + 2 H(+). In terms of biological role, mRNA decapping enzyme that specifically removes the nicotinamide adenine dinucleotide (NAD) cap from a subset of mRNAs by hydrolyzing the diphosphate linkage to produce nicotinamide mononucleotide (NMN) and 5' monophosphate mRNA. The NAD-cap is present at the 5'-end of some mRNAs and stabilizes RNA against 5'-processing. Has preference for mRNAs with a 5'-end purine. Catalyzes the hydrolysis of a broad range of dinucleotide pyrophosphates. In Klebsiella pneumoniae (strain 342), this protein is NAD-capped RNA hydrolase NudC.